The primary structure comprises 251 residues: CDP-diacylglycerol pyrophosphatase (251 aa).

Residues 4-24 traverse the membrane as a helical segment; that stretch reads AGLLFLVMIVIAVVAAGIGYW.

It belongs to the Cdh family.

The protein localises to the cell inner membrane. The enzyme catalyses a CDP-1,2-diacyl-sn-glycerol + H2O = a 1,2-diacyl-sn-glycero-3-phosphate + CMP + 2 H(+). It participates in phospholipid metabolism; CDP-diacylglycerol degradation; phosphatidate from CDP-diacylglycerol: step 1/1. The protein is CDP-diacylglycerol pyrophosphatase of Escherichia coli (strain SE11).